The chain runs to 378 residues: Fetuin-B (378 aa).

The first 18 residues, 1–18, serve as a signal peptide directing secretion; that stretch reads MGVLRLLVLCTLAACCVA. 2 consecutive Cystatin fetuin-B-type domains span residues 28–141 and 152–261; these read NAPF…YNCT and SMCP…VSCE. Asn40 carries an N-linked (GlcNAc...) asparagine glycan. Cystine bridges form between Cys96-Cys107, Cys120-Cys140, Cys154-Cys157, Cys217-Cys224, and Cys237-Cys260. N-linked (GlcNAc...) asparagine glycosylation is present at Asn139. 2 disordered regions span residues 266-338 and 357-378; these read QDQV…PQGD and LPFP…QRTP. The span at 286-297 shows a compositional bias: polar residues; the sequence is QKNTAPTSSPSI. Residues Thr289 and Thr292 are each glycosylated (O-linked (GalNAc...) threonine). A Phosphoserine modification is found at Ser316. A compositionally biased stretch (basic and acidic residues) spans 362–378; it reads KEQRSPECPGPEKQRTP.

Belongs to the fetuin family. Liver.

It is found in the secreted. Its function is as follows. Protease inhibitor required for egg fertilization. Required to prevent premature zona pellucida hardening before fertilization, probably by inhibiting the protease activity of ASTL, a protease that mediates the cleavage of ZP2 and triggers zona pellucida hardening. The polypeptide is Fetuin-B (Fetub) (Rattus norvegicus (Rat)).